Reading from the N-terminus, the 249-residue chain is tRNA (guanine-N(1)-)-methyltransferase (249 aa).

S-adenosyl-L-methionine-binding positions include glycine 113 and 133–138 (LGDFVL).

This sequence belongs to the RNA methyltransferase TrmD family. Homodimer.

The protein resides in the cytoplasm. It catalyses the reaction guanosine(37) in tRNA + S-adenosyl-L-methionine = N(1)-methylguanosine(37) in tRNA + S-adenosyl-L-homocysteine + H(+). Its function is as follows. Specifically methylates guanosine-37 in various tRNAs. The sequence is that of tRNA (guanine-N(1)-)-methyltransferase from Leptothrix cholodnii (strain ATCC 51168 / LMG 8142 / SP-6) (Leptothrix discophora (strain SP-6)).